An 81-amino-acid polypeptide reads, in one-letter code: Large ribosomal subunit protein bL31B (81 aa).

Belongs to the bacterial ribosomal protein bL31 family. Type B subfamily. In terms of assembly, part of the 50S ribosomal subunit.

The sequence is that of Large ribosomal subunit protein bL31B from Lactococcus lactis subsp. lactis (strain IL1403) (Streptococcus lactis).